We begin with the raw amino-acid sequence, 104 residues long: Large ribosomal subunit protein bL21 (104 aa).

Belongs to the bacterial ribosomal protein bL21 family. As to quaternary structure, part of the 50S ribosomal subunit. Contacts protein L20.

This protein binds to 23S rRNA in the presence of protein L20. This Clostridium botulinum (strain ATCC 19397 / Type A) protein is Large ribosomal subunit protein bL21.